The chain runs to 206 residues: HTH-type transcriptional regulator Hpr (206 aa).

The HTH marR-type domain occupies 13 to 157 (ALLFSQRMAQ…MMCIIRNIYG (145 aa)). Residues 63-86 (ISEIAKFGVMHVSTAFNFSKKLEE) constitute a DNA-binding region (H-T-H motif). A disordered region spans residues 186–206 (SEELEDSADAAEKAAKANQIV).

Homodimer.

Negative regulator of protease production and sporulation. This is HTH-type transcriptional regulator Hpr from Bacillus pumilus (strain SAFR-032).